Here is a 201-residue protein sequence, read N- to C-terminus: Ubiquinone biosynthesis accessory factor UbiJ (201 aa).

One can recognise an SCP2 domain in the interval 15 to 112 (LNTFLYRSPA…QVVQNFVALA (98 aa)).

It belongs to the UbiJ family.

The protein resides in the cytoplasm. Its pathway is cofactor biosynthesis; ubiquinone biosynthesis. Required for ubiquinone (coenzyme Q) biosynthesis under aerobic conditions. Binds hydrophobic ubiquinone biosynthetic intermediates via its SCP2 domain and is essential for the stability of the Ubi complex. May constitute a docking platform where Ubi enzymes assemble and access their SCP2-bound polyprenyl substrates. Required for intracellular proliferation in macrophages. This is Ubiquinone biosynthesis accessory factor UbiJ from Salmonella typhimurium (strain LT2 / SGSC1412 / ATCC 700720).